A 1041-amino-acid chain; its full sequence is FHIP family protein CG3558 (1041 aa).

Ser-490 carries the post-translational modification Phosphoserine. Disordered stretches follow at residues 619–648 (RPAD…SSSL), 792–818 (KGNE…QGQL), 858–879 (SMFS…SASS), 903–947 (DGRG…SNSS), and 959–986 (SNTT…SEPA). The segment covering 628–637 (TDTTVATTAS) has biased composition (polar residues). Position 797 is a phosphoserine (Ser-797). Residues 800–818 (HHSQQQQMVTNSGQQQGQL) are compositionally biased toward polar residues. Residues 903 to 925 (DGRGISQAQTSAGTCETSLSTQP) are compositionally biased toward polar residues. Residues 927–947 (AGASRTGANATSTAASGSNSS) are compositionally biased toward low complexity. The segment covering 959-968 (SNTTTHSAST) has biased composition (polar residues).

It belongs to the FHIP family.

This chain is FHIP family protein CG3558, found in Drosophila melanogaster (Fruit fly).